A 359-amino-acid chain; its full sequence is Phospho-N-acetylmuramoyl-pentapeptide-transferase (359 aa).

10 helical membrane passes run 26–46 (TIYA…WLIR), 75–95 (GGVL…NLTI), 97–117 (YVWL…ADDY), 134–154 (LACE…KPGF), 166–186 (VLPD…VGAA), 197–217 (GLAI…AYFA), 233–253 (GVGE…GFLW), 261–281 (VFMG…LAIV), 286–306 (ILLA…IFQV), and 336–356 (KVIV…ISTL).

It belongs to the glycosyltransferase 4 family. MraY subfamily. Mg(2+) serves as cofactor.

The protein localises to the cell inner membrane. The catalysed reaction is UDP-N-acetyl-alpha-D-muramoyl-L-alanyl-gamma-D-glutamyl-meso-2,6-diaminopimeloyl-D-alanyl-D-alanine + di-trans,octa-cis-undecaprenyl phosphate = di-trans,octa-cis-undecaprenyl diphospho-N-acetyl-alpha-D-muramoyl-L-alanyl-D-glutamyl-meso-2,6-diaminopimeloyl-D-alanyl-D-alanine + UMP. The protein operates within cell wall biogenesis; peptidoglycan biosynthesis. Functionally, catalyzes the initial step of the lipid cycle reactions in the biosynthesis of the cell wall peptidoglycan: transfers peptidoglycan precursor phospho-MurNAc-pentapeptide from UDP-MurNAc-pentapeptide onto the lipid carrier undecaprenyl phosphate, yielding undecaprenyl-pyrophosphoryl-MurNAc-pentapeptide, known as lipid I. This chain is Phospho-N-acetylmuramoyl-pentapeptide-transferase, found in Syntrophus aciditrophicus (strain SB).